Consider the following 346-residue polypeptide: Phosphate acyltransferase (346 aa).

This sequence belongs to the PlsX family. In terms of assembly, homodimer. Probably interacts with PlsY.

The protein resides in the cytoplasm. It catalyses the reaction a fatty acyl-[ACP] + phosphate = an acyl phosphate + holo-[ACP]. Its pathway is lipid metabolism; phospholipid metabolism. In terms of biological role, catalyzes the reversible formation of acyl-phosphate (acyl-PO(4)) from acyl-[acyl-carrier-protein] (acyl-ACP). This enzyme utilizes acyl-ACP as fatty acyl donor, but not acyl-CoA. In Synechococcus elongatus (strain ATCC 33912 / PCC 7942 / FACHB-805) (Anacystis nidulans R2), this protein is Phosphate acyltransferase.